The following is an 89-amino-acid chain: Small ribosomal subunit protein bS20 (89 aa).

The protein belongs to the bacterial ribosomal protein bS20 family.

Functionally, binds directly to 16S ribosomal RNA. This Hahella chejuensis (strain KCTC 2396) protein is Small ribosomal subunit protein bS20.